The chain runs to 147 residues: Large ribosomal subunit protein bL9 (147 aa).

It belongs to the bacterial ribosomal protein bL9 family.

Binds to the 23S rRNA. This is Large ribosomal subunit protein bL9 from Bacteroides thetaiotaomicron (strain ATCC 29148 / DSM 2079 / JCM 5827 / CCUG 10774 / NCTC 10582 / VPI-5482 / E50).